The chain runs to 234 residues: Probable porphobilinogen deaminase (234 aa).

Belongs to the HMBS family.

The catalysed reaction is 4 porphobilinogen + H2O = hydroxymethylbilane + 4 NH4(+). It functions in the pathway porphyrin-containing compound metabolism; protoporphyrin-IX biosynthesis; coproporphyrinogen-III from 5-aminolevulinate: step 2/4. Tetrapolymerization of the monopyrrole PBG into the hydroxymethylbilane pre-uroporphyrinogen in several discrete steps. The polypeptide is Probable porphobilinogen deaminase (hemC) (Chlamydia pneumoniae (Chlamydophila pneumoniae)).